The primary structure comprises 313 residues: Secretory carrier-associated membrane protein 4 (313 aa).

A disordered region spans residues 1 to 69 (MAGRSRYDNP…LPPEPADFYN (69 aa)). At 1-148 (MAGRSRYDNP…EIPVHLQRTQ (148 aa)) the chain is on the cytoplasmic side. Positions 85–116 (MKTREKELLAKEAELNRREKEIKRREEAAARA) form a coiled coil. The next 4 membrane-spanning stretches (helical) occupy residues 149 to 169 (YVAF…IICV), 181 to 201 (IWFL…YLWY), 216 to 236 (FGWF…AAVS), and 255 to 275 (LIGN…MFCL). Residues 276–313 (ESLLSMWVIQRVYLYFRGSGKEAEMKREAARSAARAAF) are Cytoplasmic-facing.

It belongs to the SCAMP family.

The protein resides in the cell membrane. It localises to the cytoplasmic vesicle. The protein localises to the secretory vesicle membrane. Probably involved in membrane trafficking. The polypeptide is Secretory carrier-associated membrane protein 4 (SCAMP4) (Oryza sativa subsp. japonica (Rice)).